The primary structure comprises 278 residues: Probable NADP-dependent mannitol dehydrogenase (278 aa).

Residues isoleucine 45, asparagine 117, and lysine 152 each coordinate NADP(+). Residues serine 171 and tyrosine 186 each act as proton donor in the active site. The NADP(+) site is built by tyrosine 186, lysine 190, and threonine 220. Lysine 190 acts as the Lowers pKa of active site Tyr in catalysis.

It belongs to the short-chain dehydrogenases/reductases (SDR) family. As to quaternary structure, homotetramer.

The enzyme catalyses D-mannitol + NADP(+) = D-fructose + NADPH + H(+). In terms of biological role, versatile oxidoreductase that catalyzes the oxidation and reduction of polar as well as non-polar substrates at a very broad pH range. Preferentially oxidizes secondary alcohols. Has highest activity for racemic 2-heptanol and racemic octanol. Is also an efficient reductase for selected substrates. Substrate selectivity was found for medium chain length ketones with the carbonyl function at position C-2. Has highest activities for ribulose and fructose. The enzyme is (R)-selective in the reduction direction and produces exclusively the (R)-enantiomer. This is Probable NADP-dependent mannitol dehydrogenase from Yarrowia lipolytica (strain CLIB 122 / E 150) (Yeast).